Reading from the N-terminus, the 395-residue chain is MHC class I-like protein MILL1 (395 aa).

The first 32 residues, 1–32, serve as a signal peptide directing secretion; it reads MLLSRNLRALAAIHLWIVYLLLEDLLGTCAEG. Residues 57-148 form an alpha-1 region; it reads AVAEPHTLRY…ITAQNGQNTD (92 aa). 3 N-linked (GlcNAc...) asparagine glycosylation sites follow: N98, N163, and N199. The interval 149–240 is alpha-2; that stretch reads LHILQATFGC…SLRNGLLNTG (92 aa). 2 disulfides stabilise this stretch: C158–C221 and C260–C317. The tract at residues 241 to 337 is alpha-3; that stretch reads FPKVIVTFRN…EPAATEAPVY (97 aa). One can recognise an Ig-like C1-type domain in the interval 242-333; that stretch reads PKVIVTFRNY…HNINEPAATE (92 aa). The interval 332 to 352 is disordered; that stretch reads TEAPVYGARREQPPTSGVGSR. The tract at residues 338–368 is connecting peptide; it reads GARREQPPTSGVGSRVGKSLWSAMTTALVVI. A lipid anchor (GPI-anchor amidated serine) is attached at S369. Positions 370-395 are cleaved as a propeptide — removed in mature form; it reads WTLSQKLMGPLLWFCSGGFCSFLQCW.

The protein belongs to the MHC class I family. Heterodimer with B2M. Post-translationally, N-glycosylated. In terms of tissue distribution, expressed in stomach, intestine, uterus, skeletal muscle and heart.

The protein localises to the cell membrane. This Mus musculus (Mouse) protein is MHC class I-like protein MILL1.